A 429-amino-acid chain; its full sequence is Serine--tRNA ligase (429 aa).

236 to 238 (TAE) lines the L-serine pocket. 267–269 (RRE) provides a ligand contact to ATP. Glu290 lines the L-serine pocket. 354 to 357 (EISS) serves as a coordination point for ATP. Position 390 (Ser390) interacts with L-serine.

It belongs to the class-II aminoacyl-tRNA synthetase family. Type-1 seryl-tRNA synthetase subfamily. Homodimer. The tRNA molecule binds across the dimer.

Its subcellular location is the cytoplasm. It catalyses the reaction tRNA(Ser) + L-serine + ATP = L-seryl-tRNA(Ser) + AMP + diphosphate + H(+). The catalysed reaction is tRNA(Sec) + L-serine + ATP = L-seryl-tRNA(Sec) + AMP + diphosphate + H(+). It participates in aminoacyl-tRNA biosynthesis; selenocysteinyl-tRNA(Sec) biosynthesis; L-seryl-tRNA(Sec) from L-serine and tRNA(Sec): step 1/1. Its function is as follows. Catalyzes the attachment of serine to tRNA(Ser). Is also able to aminoacylate tRNA(Sec) with serine, to form the misacylated tRNA L-seryl-tRNA(Sec), which will be further converted into selenocysteinyl-tRNA(Sec). The sequence is that of Serine--tRNA ligase from Gloeobacter violaceus (strain ATCC 29082 / PCC 7421).